The following is a 156-amino-acid chain: B3 domain-containing protein At5g26805 (156 aa).

The segment at residues 57–155 (KFQLPMEKIR…MFCFSVLDGR (99 aa)) is a DNA-binding region (TF-B3).

It is found in the nucleus. The sequence is that of B3 domain-containing protein At5g26805 from Arabidopsis thaliana (Mouse-ear cress).